A 191-amino-acid polypeptide reads, in one-letter code: Cytochrome c oxidase assembly protein CtaG (191 aa).

Over 1 to 9 (MSLSPHQKT) the chain is Cytoplasmic. A helical; Signal-anchor for type II membrane protein membrane pass occupies residues 10-30 (AGGLVLVVAVMGAASFAAVPF). Residues 31-191 (YNWFCRVTGF…LAAESATDVN (161 aa)) are Periplasmic-facing.

Belongs to the COX11/CtaG family.

Its subcellular location is the cell inner membrane. Exerts its effect at some terminal stage of cytochrome c oxidase synthesis, probably by being involved in the insertion of the copper B into subunit I. In Cereibacter sphaeroides (strain ATCC 17023 / DSM 158 / JCM 6121 / CCUG 31486 / LMG 2827 / NBRC 12203 / NCIMB 8253 / ATH 2.4.1.) (Rhodobacter sphaeroides), this protein is Cytochrome c oxidase assembly protein CtaG.